Consider the following 894-residue polypeptide: Phosphoenolpyruvate carboxylase (894 aa).

Active-site residues include His-143 and Lys-556.

The protein belongs to the PEPCase type 1 family. Requires Mg(2+) as cofactor.

It carries out the reaction oxaloacetate + phosphate = phosphoenolpyruvate + hydrogencarbonate. In terms of biological role, forms oxaloacetate, a four-carbon dicarboxylic acid source for the tricarboxylic acid cycle. The sequence is that of Phosphoenolpyruvate carboxylase from Acinetobacter baumannii (strain ATCC 17978 / DSM 105126 / CIP 53.77 / LMG 1025 / NCDC KC755 / 5377).